Here is a 421-residue protein sequence, read N- to C-terminus: E3 ubiquitin protein ligase DRIP1 (421 aa).

The RING-type zinc-finger motif lies at 16–57 (CSICDNILRDATTISECLHTFCRKCIYEKITEDEIETCPVCN). Polar residues-rich tracts occupy residues 106 to 121 (ISSLVVSTPMVSAQAG) and 157 to 172 (ESTSSPDTLNKFTQNK). 2 disordered regions span residues 106 to 198 (ISSL…WDSK) and 216 to 307 (PLKS…QERR). Residues 178–198 (SCKESISNKENKDGDEPWDSK) are compositionally biased toward basic and acidic residues. The segment covering 218–227 (KSSASQGSGS) has biased composition (low complexity). Basic residues predominate over residues 244–253 (TKTKNKKRKC). Over residues 262–271 (NGDPTTSETV) the composition is skewed to polar residues. Over residues 274-284 (KRMRTTQRKRS) the composition is skewed to basic residues. Residues 285–294 (ATTLGDSRNL) show a composition bias toward polar residues.

In terms of assembly, interacts with DREB2A. In terms of processing, autoubiquitinated. In terms of tissue distribution, expressed in roots, leaves and flowers.

The protein localises to the nucleus. The enzyme catalyses S-ubiquitinyl-[E2 ubiquitin-conjugating enzyme]-L-cysteine + [acceptor protein]-L-lysine = [E2 ubiquitin-conjugating enzyme]-L-cysteine + N(6)-ubiquitinyl-[acceptor protein]-L-lysine.. The protein operates within protein modification; protein ubiquitination. In terms of biological role, E3 ubiquitin-protein ligase that acts as a negative regulator of the response to water stress. Mediates ubiquitination and subsequent proteasomal degradation of the drought-induced transcriptional activator DREB2A. Functionally redundant with DRIP2. This chain is E3 ubiquitin protein ligase DRIP1 (DRIP1), found in Arabidopsis thaliana (Mouse-ear cress).